The chain runs to 247 residues: Cell division protein ZapD (247 aa).

This sequence belongs to the ZapD family. As to quaternary structure, interacts with FtsZ.

It is found in the cytoplasm. Its function is as follows. Cell division factor that enhances FtsZ-ring assembly. Directly interacts with FtsZ and promotes bundling of FtsZ protofilaments, with a reduction in FtsZ GTPase activity. The protein is Cell division protein ZapD of Citrobacter koseri (strain ATCC BAA-895 / CDC 4225-83 / SGSC4696).